We begin with the raw amino-acid sequence, 160 residues long: 6,7-dimethyl-8-ribityllumazine synthase (160 aa).

5-amino-6-(D-ribitylamino)uracil contacts are provided by residues tryptophan 27, 59–61 (AIE), and 81–83 (VVI). 86–87 (QT) lines the (2S)-2-hydroxy-3-oxobutyl phosphate pocket. Histidine 89 functions as the Proton donor in the catalytic mechanism. Asparagine 114 provides a ligand contact to 5-amino-6-(D-ribitylamino)uracil. Arginine 128 is a binding site for (2S)-2-hydroxy-3-oxobutyl phosphate.

Belongs to the DMRL synthase family. In terms of assembly, homopentamer.

It carries out the reaction (2S)-2-hydroxy-3-oxobutyl phosphate + 5-amino-6-(D-ribitylamino)uracil = 6,7-dimethyl-8-(1-D-ribityl)lumazine + phosphate + 2 H2O + H(+). It participates in cofactor biosynthesis; riboflavin biosynthesis; riboflavin from 2-hydroxy-3-oxobutyl phosphate and 5-amino-6-(D-ribitylamino)uracil: step 1/2. Its function is as follows. Catalyzes the formation of 6,7-dimethyl-8-ribityllumazine by condensation of 5-amino-6-(D-ribitylamino)uracil with 3,4-dihydroxy-2-butanone 4-phosphate. This is the penultimate step in the biosynthesis of riboflavin. The sequence is that of 6,7-dimethyl-8-ribityllumazine synthase from Mycobacterium avium (strain 104).